A 101-amino-acid polypeptide reads, in one-letter code: Ascorbate-specific PTS system EIIB component (101 aa).

The PTS EIIB type-2 domain occupies V3–F96. C9 acts as the Phosphocysteine intermediate in catalysis. C9 is subject to Phosphocysteine.

The protein localises to the cytoplasm. It carries out the reaction N(pros)-phospho-L-histidyl-[protein] + L-ascorbate(out) = L-ascorbate 6-phosphate(in) + L-histidyl-[protein]. In terms of biological role, the phosphoenolpyruvate-dependent sugar phosphotransferase system (sugar PTS), a major carbohydrate active transport system, catalyzes the phosphorylation of incoming sugar substrates concomitantly with their translocation across the cell membrane. The enzyme II UlaABC PTS system is involved in ascorbate transport. The sequence is that of Ascorbate-specific PTS system EIIB component (ulaB) from Shigella dysenteriae serotype 1 (strain Sd197).